Here is a 541-residue protein sequence, read N- to C-terminus: 5' exonuclease Apollo (541 aa).

A Glycyl lysine isopeptide (Lys-Gly) (interchain with G-Cter in SUMO2) cross-link involves residue lysine 334. Disordered stretches follow at residues 350-375 (TQGV…KKHK) and 450-489 (IGLG…TTHL). Basic and acidic residues predominate over residues 358 to 371 (PEEKADQVKVDRDS). Residues 492-507 (ESGGLALKYLLTPVDF) carry the TBM motif.

Belongs to the DNA repair metallo-beta-lactamase (DRMBL) family. Interacts with TERF2; the interaction is direct. Interacts with MUS81, MRE11 and FANCD2. Interacts with HSPA2, HSPA8 and HSPA14. Interacts with SPAG5. Post-translationally, ubiquitinated, leading to its degradation. Interaction with TERF2 protects it from ubiquitination.

It is found in the chromosome. Its subcellular location is the telomere. It localises to the nucleus. The protein localises to the cytoplasm. The protein resides in the cytoskeleton. It is found in the microtubule organizing center. Its subcellular location is the centrosome. It catalyses the reaction a beta-lactam + H2O = a substituted beta-amino acid. Its function is as follows. 5'-3' exonuclease that plays a central role in telomere maintenance and protection during S-phase. Participates in the protection of telomeres against non-homologous end-joining (NHEJ)-mediated repair, thereby ensuring that telomeres do not fuse. Plays a key role in telomeric loop (T loop) formation by being recruited by TERF2 at the leading end telomeres and by processing leading-end telomeres immediately after their replication via its exonuclease activity: generates 3' single-stranded overhang at the leading end telomeres avoiding blunt leading-end telomeres that are vulnerable to end-joining reactions and expose the telomere end in a manner that activates the DNA repair pathways. Together with TERF2, required to protect telomeres from replicative damage during replication by controlling the amount of DNA topoisomerase (TOP1, TOP2A and TOP2B) needed for telomere replication during fork passage and prevent aberrant telomere topology. Also involved in response to DNA damage: plays a role in response to DNA interstrand cross-links (ICLs) by facilitating double-strand break formation. In case of spindle stress, involved in prophase checkpoint. Possesses beta-lactamase activity, catalyzing the hydrolysis of penicillin G and nitrocefin. Exhibits no activity towards other beta-lactam antibiotic classes including cephalosporins (cefotaxime) and carbapenems (imipenem). The polypeptide is 5' exonuclease Apollo (Dclre1b) (Rattus norvegicus (Rat)).